A 137-amino-acid chain; its full sequence is Nucleoside diphosphate kinase (137 aa).

ATP is bound by residues Lys9, Phe57, Arg85, Thr91, Arg102, and Asn112. His115 functions as the Pros-phosphohistidine intermediate in the catalytic mechanism.

This sequence belongs to the NDK family. In terms of assembly, homotetramer. Mg(2+) is required as a cofactor.

Its subcellular location is the cytoplasm. It carries out the reaction a 2'-deoxyribonucleoside 5'-diphosphate + ATP = a 2'-deoxyribonucleoside 5'-triphosphate + ADP. It catalyses the reaction a ribonucleoside 5'-diphosphate + ATP = a ribonucleoside 5'-triphosphate + ADP. In terms of biological role, major role in the synthesis of nucleoside triphosphates other than ATP. The ATP gamma phosphate is transferred to the NDP beta phosphate via a ping-pong mechanism, using a phosphorylated active-site intermediate. This Campylobacter concisus (strain 13826) protein is Nucleoside diphosphate kinase.